We begin with the raw amino-acid sequence, 547 residues long: Probable bifunctional tRNA threonylcarbamoyladenosine biosynthesis protein (547 aa).

The kae1 stretch occupies residues Met-1–Trp-329. 3 residues coordinate Fe cation: His-112, His-116, and Tyr-133. Residues Tyr-133–Gly-137, Asp-165, Gly-178, Glu-182, and Asn-262 each bind L-threonylcarbamoyladenylate. Asp-290 is a binding site for Fe cation. The 202-residue stretch at Gln-346–Leu-547 folds into the Protein kinase domain. ATP-binding positions include Ile-352 to Ile-360 and Lys-373. The active-site Proton acceptor; for kinase activity is Asp-465.

This sequence in the N-terminal section; belongs to the KAE1 / TsaD family. In the C-terminal section; belongs to the protein kinase superfamily. Tyr protein kinase family. BUD32 subfamily. Component of the KEOPS complex that consists of Kae1, Bud32, Cgi121 and Pcc1; the whole complex dimerizes. The cofactor is Fe(2+).

The protein resides in the cytoplasm. The enzyme catalyses L-seryl-[protein] + ATP = O-phospho-L-seryl-[protein] + ADP + H(+). It catalyses the reaction L-threonyl-[protein] + ATP = O-phospho-L-threonyl-[protein] + ADP + H(+). It carries out the reaction L-threonylcarbamoyladenylate + adenosine(37) in tRNA = N(6)-L-threonylcarbamoyladenosine(37) in tRNA + AMP + H(+). In terms of biological role, required for the formation of a threonylcarbamoyl group on adenosine at position 37 (t(6)A37) in tRNAs that read codons beginning with adenine. Is a component of the KEOPS complex that is probably involved in the transfer of the threonylcarbamoyl moiety of threonylcarbamoyl-AMP (TC-AMP) to the N6 group of A37. The Kae1 domain likely plays a direct catalytic role in this reaction. The Bud32 domain probably displays kinase activity that regulates Kae1 function. The protein is Probable bifunctional tRNA threonylcarbamoyladenosine biosynthesis protein of Methanococcus vannielii (strain ATCC 35089 / DSM 1224 / JCM 13029 / OCM 148 / SB).